Consider the following 335-residue polypeptide: Rho guanine nucleotide exchange factor 39 (335 aa).

The DH domain occupies 22-197 (KRACTARELL…SETAQRVHTI (176 aa)). A PH domain is found at 227-331 (WFLRQGWLLV…WYHSLTWAIS (105 aa)).

As to expression, strongly expressed in hepatocellular carcinoma (HCC) compared with their non-cancerous counterparts.

The protein localises to the cell membrane. In terms of biological role, promotes cell proliferation. This Homo sapiens (Human) protein is Rho guanine nucleotide exchange factor 39 (ARHGEF39).